The chain runs to 275 residues: Undecaprenyl-diphosphatase (275 aa).

The next 8 helical transmembrane spans lie at leucine 2–isoleucine 22, phenylalanine 43–tyrosine 63, tryptophan 83–leucine 103, leucine 111–isoleucine 131, threonine 147–glycine 167, tyrosine 186–leucine 206, leucine 221–isoleucine 241, and alanine 255–histidine 275.

This sequence belongs to the UppP family.

The protein localises to the cell membrane. It catalyses the reaction di-trans,octa-cis-undecaprenyl diphosphate + H2O = di-trans,octa-cis-undecaprenyl phosphate + phosphate + H(+). Functionally, catalyzes the dephosphorylation of undecaprenyl diphosphate (UPP). Confers resistance to bacitracin. This is Undecaprenyl-diphosphatase from Lactiplantibacillus plantarum (strain ATCC BAA-793 / NCIMB 8826 / WCFS1) (Lactobacillus plantarum).